We begin with the raw amino-acid sequence, 370 residues long: NADH-quinone oxidoreductase subunit D 2 (370 aa).

The protein belongs to the complex I 49 kDa subunit family. In terms of assembly, NDH-1 is composed of 14 different subunits. Subunits NuoB, C, D, E, F, and G constitute the peripheral sector of the complex.

It localises to the cell inner membrane. The catalysed reaction is a quinone + NADH + 5 H(+)(in) = a quinol + NAD(+) + 4 H(+)(out). Its function is as follows. NDH-1 shuttles electrons from NADH, via FMN and iron-sulfur (Fe-S) centers, to quinones in the respiratory chain. The immediate electron acceptor for the enzyme in this species is believed to be ubiquinone. Couples the redox reaction to proton translocation (for every two electrons transferred, four hydrogen ions are translocated across the cytoplasmic membrane), and thus conserves the redox energy in a proton gradient. The protein is NADH-quinone oxidoreductase subunit D 2 of Solibacter usitatus (strain Ellin6076).